The primary structure comprises 263 residues: Regulatory protein RecX (263 aa).

Belongs to the RecX family.

The protein localises to the cytoplasm. Its function is as follows. Modulates RecA activity. The protein is Regulatory protein RecX of Bacillus pumilus (strain SAFR-032).